The primary structure comprises 693 residues: Heat shock protein homolog SSE1 (693 aa).

Serine 2 is subject to N-acetylserine. Residue lysine 195 forms a Glycyl lysine isopeptide (Lys-Gly) (interchain with G-Cter in ubiquitin) linkage. Threonine 242 carries the phosphothreonine modification. The segment at 653–693 (IRSKQEASQMAAMAEKLAAQRKAEAEKKEEKKDTEGDVDMD) is disordered. Serine 660 is subject to Phosphoserine. The segment covering 673–687 (RKAEAEKKEEKKDTE) has biased composition (basic and acidic residues).

The protein belongs to the heat shock protein 70 family.

The protein localises to the cytoplasm. In terms of biological role, has a calcium-dependent calmodulin-binding activity. Required for normal growth at various temperatures. The polypeptide is Heat shock protein homolog SSE1 (SSE1) (Saccharomyces cerevisiae (strain ATCC 204508 / S288c) (Baker's yeast)).